A 423-amino-acid chain; its full sequence is Imidazolonepropionase (423 aa).

Fe(3+) is bound by residues His78 and His80. Zn(2+) is bound by residues His78 and His80. Residues Arg87, Tyr150, and His183 each coordinate 4-imidazolone-5-propanoate. An N-formimidoyl-L-glutamate-binding site is contributed by Tyr150. His247 provides a ligand contact to Fe(3+). His247 is a binding site for Zn(2+). Glu250 is a binding site for 4-imidazolone-5-propanoate. Fe(3+) is bound at residue Asp322. Asp322 is a binding site for Zn(2+). The N-formimidoyl-L-glutamate site is built by Asn324 and Gly326. Ser327 is a binding site for 4-imidazolone-5-propanoate.

This sequence belongs to the metallo-dependent hydrolases superfamily. HutI family. Zn(2+) serves as cofactor. It depends on Fe(3+) as a cofactor.

The protein resides in the cytoplasm. The catalysed reaction is 4-imidazolone-5-propanoate + H2O = N-formimidoyl-L-glutamate. It participates in amino-acid degradation; L-histidine degradation into L-glutamate; N-formimidoyl-L-glutamate from L-histidine: step 3/3. Catalyzes the hydrolytic cleavage of the carbon-nitrogen bond in imidazolone-5-propanoate to yield N-formimidoyl-L-glutamate. It is the third step in the universal histidine degradation pathway. This is Imidazolonepropionase from Bacillus cereus (strain ATCC 10987 / NRS 248).